The sequence spans 211 residues: Redox-sensing transcriptional repressor Rex (211 aa).

Positions 13–52 (TYLRILEELEAQGVHRTSSEQLGELAQVTAFQVRKDLSYF) form a DNA-binding region, H-T-H motif. An NAD(+)-binding site is contributed by 87 to 92 (GMGRLG).

The protein belongs to the transcriptional regulatory Rex family. In terms of assembly, homodimer.

The protein resides in the cytoplasm. In terms of biological role, modulates transcription in response to changes in cellular NADH/NAD(+) redox state. This chain is Redox-sensing transcriptional repressor Rex, found in Thermus aquaticus.